A 77-amino-acid polypeptide reads, in one-letter code: MSEYMKNEILEFLNRHNGGKTAEIAEALAVTDYQARYYLLLLEKEGMVQRSPLRRGMATYWFLKGEMQAGQNCSSTT.

It to E.coli AfaF and DaaF.

Plays a role in the inhibition of methylation at the GATC1028 site located in the regulatory region upstream of the pabA promoter. May, in conjunction with the Mbf (methylation blocking factor), inhibits deoxyadenosine methylase from methylating the GATC1028 site. This chain is Major pilus subunit operon regulatory protein (papI), found in Escherichia coli.